A 222-amino-acid chain; its full sequence is Acyl-protein thioesterase 1 homolog 2 (222 aa).

Residues Ser-116, Asp-169, and His-202 each act as charge relay system in the active site.

It belongs to the AB hydrolase superfamily. AB hydrolase 2 family.

Its subcellular location is the cytoplasm. It localises to the nucleus. The enzyme catalyses S-hexadecanoyl-L-cysteinyl-[protein] + H2O = L-cysteinyl-[protein] + hexadecanoate + H(+). Its function is as follows. Hydrolyzes fatty acids from S-acylated cysteine residues in proteins with a strong preference for palmitoylated G-alpha proteins over other acyl substrates. Mediates the deacylation of G-alpha proteins such as GPA1 in vivo, but has weak or no activity toward palmitoylated Ras proteins. Has weak lysophospholipase activity in vitro; however such activity may not exist in vivo. This Dictyostelium discoideum (Social amoeba) protein is Acyl-protein thioesterase 1 homolog 2.